The primary structure comprises 412 residues: Multifunctional CCA protein (412 aa).

The ATP site is built by G8 and R11. CTP is bound by residues G8 and R11. Mg(2+) is bound by residues E21 and D23. R91, R137, and R140 together coordinate ATP. Residues R91, R137, and R140 each contribute to the CTP site. Positions 228–329 constitute an HD domain; the sequence is TGIHTLMTLA…LKLFNAIDVW (102 aa).

This sequence belongs to the tRNA nucleotidyltransferase/poly(A) polymerase family. Bacterial CCA-adding enzyme type 1 subfamily. In terms of assembly, monomer. Can also form homodimers and oligomers. The cofactor is Mg(2+). Ni(2+) serves as cofactor.

It catalyses the reaction a tRNA precursor + 2 CTP + ATP = a tRNA with a 3' CCA end + 3 diphosphate. The enzyme catalyses a tRNA with a 3' CCA end + 2 CTP + ATP = a tRNA with a 3' CCACCA end + 3 diphosphate. In terms of biological role, catalyzes the addition and repair of the essential 3'-terminal CCA sequence in tRNAs without using a nucleic acid template. Adds these three nucleotides in the order of C, C, and A to the tRNA nucleotide-73, using CTP and ATP as substrates and producing inorganic pyrophosphate. tRNA 3'-terminal CCA addition is required both for tRNA processing and repair. Also involved in tRNA surveillance by mediating tandem CCA addition to generate a CCACCA at the 3' terminus of unstable tRNAs. While stable tRNAs receive only 3'-terminal CCA, unstable tRNAs are marked with CCACCA and rapidly degraded. The polypeptide is Multifunctional CCA protein (Yersinia pestis).